The primary structure comprises 123 residues: UPF0102 protein PSHAa2523 (123 aa).

The protein belongs to the UPF0102 family.

This chain is UPF0102 protein PSHAa2523, found in Pseudoalteromonas translucida (strain TAC 125).